A 173-amino-acid polypeptide reads, in one-letter code: Crossover junction endodeoxyribonuclease RuvC (173 aa).

Active-site residues include Asp-11, Glu-71, and Asp-143. Asp-11, Glu-71, and Asp-143 together coordinate Mg(2+).

Belongs to the RuvC family. Homodimer which binds Holliday junction (HJ) DNA. The HJ becomes 2-fold symmetrical on binding to RuvC with unstacked arms; it has a different conformation from HJ DNA in complex with RuvA. In the full resolvosome a probable DNA-RuvA(4)-RuvB(12)-RuvC(2) complex forms which resolves the HJ. It depends on Mg(2+) as a cofactor.

The protein resides in the cytoplasm. The enzyme catalyses Endonucleolytic cleavage at a junction such as a reciprocal single-stranded crossover between two homologous DNA duplexes (Holliday junction).. Its function is as follows. The RuvA-RuvB-RuvC complex processes Holliday junction (HJ) DNA during genetic recombination and DNA repair. Endonuclease that resolves HJ intermediates. Cleaves cruciform DNA by making single-stranded nicks across the HJ at symmetrical positions within the homologous arms, yielding a 5'-phosphate and a 3'-hydroxyl group; requires a central core of homology in the junction. The consensus cleavage sequence is 5'-(A/T)TT(C/G)-3'. Cleavage occurs on the 3'-side of the TT dinucleotide at the point of strand exchange. HJ branch migration catalyzed by RuvA-RuvB allows RuvC to scan DNA until it finds its consensus sequence, where it cleaves and resolves the cruciform DNA. This chain is Crossover junction endodeoxyribonuclease RuvC, found in Brucella abortus (strain 2308).